Consider the following 860-residue polypeptide: MTEYTPMIKQYLEIKDKYQDAFLFFRLGDFYEMFFEDALNASQILEITLTGREGGTKEKIPMCGVPYHSASGYIDTLIEKGYKVAICEQVEDPKTTKGMVKREVVQLISPGTVMDERGLKAKENNYIASLYCYEGKEYGFAYSDLSTGELKSTVIEASEDRLINELTTLSTRELIVSESEKEVLSDVMKEQLGLTFSVHEEDTIPAENEKLVTRHMSLSEKRAIGKLLHYLKETQKRDLGHLQQAIHYETSNYMKMDYYSKRNLELAESIRGKGRQGTLLWLLDNTQTAMGGRMLKQWIDRPLIDRKQIIERQDDVSELMAHFFERLELVENLKNVYDLERLAGRVAYGNVNARDLIQLRNSLYQIPRIRATLLSMNSKSLTALANQLDPCEELTEKLEEAIVDSAPISIREGGIIKDGYNSQLDTYRDASRNGKTWIAELERKERELTGIKTMKVGFNRVFGYYIEVTRANTHLLPEGRYERKQTLANAERYITPELKEKEKLILDAEEKSMELEYQLFTEVREMVKDYIERLQKLAKSVSEIDCLQSFADISEKNHFIRPTLSEDGSLHVKQGRHPVVEKVMGAQSYVANDCDLDQNREILLITGPNMSGKSTYMRQVALTAICAQVGCFVPAEEATLPIFDQIFTRIGAADDLIAGQSTFMVEMLEARNAIVHATKDSLILFDEIGRGTATYDGMALAQAIIEYIHENVHAKTLFSTHYHELTDLEKELRGLQNIHVSAVEENGKVVFLHKIKEGPADKSYGIHVAELAELPKSLIERASRILEQLESNDKKIIITQDKQPEEIHEEVQLSMFPVEPEEKASSKETKLLKEIAAMNIMQMTPMDAMNKLYELQSKIH.

ATP is bound at residue 607–614 (GPNMSGKS).

The protein belongs to the DNA mismatch repair MutS family.

Its function is as follows. This protein is involved in the repair of mismatches in DNA. It is possible that it carries out the mismatch recognition step. This protein has a weak ATPase activity. The chain is DNA mismatch repair protein MutS from Listeria innocua serovar 6a (strain ATCC BAA-680 / CLIP 11262).